The primary structure comprises 317 residues: Methionyl-tRNA formyltransferase (317 aa).

112–115 lines the (6S)-5,6,7,8-tetrahydrofolate pocket; that stretch reads SLLP.

Belongs to the Fmt family.

It catalyses the reaction L-methionyl-tRNA(fMet) + (6R)-10-formyltetrahydrofolate = N-formyl-L-methionyl-tRNA(fMet) + (6S)-5,6,7,8-tetrahydrofolate + H(+). Its function is as follows. Attaches a formyl group to the free amino group of methionyl-tRNA(fMet). The formyl group appears to play a dual role in the initiator identity of N-formylmethionyl-tRNA by promoting its recognition by IF2 and preventing the misappropriation of this tRNA by the elongation apparatus. The polypeptide is Methionyl-tRNA formyltransferase (Geobacter sulfurreducens (strain ATCC 51573 / DSM 12127 / PCA)).